The following is a 53-amino-acid chain: Alpha-1-antiproteinase 1 (53 aa).

The disordered stretch occupies residues 1-28 (EDLQGDAVPETSATKDDNEXPEMIPMSL).

The protein belongs to the serpin family. In terms of processing, N-glycosylated; contains biantennary glycans. Plasma.

It is found in the secreted. The chain is Alpha-1-antiproteinase 1 from Equus caballus (Horse).